A 665-amino-acid chain; its full sequence is Transketolase 1 (665 aa).

Substrate is bound at residue His26. Residues His66 and 114-116 (GPL) each bind thiamine diphosphate. Asp155 serves as a coordination point for Mg(2+). Thiamine diphosphate is bound by residues Gly156 and Asn185. Residues Asn185 and Ile187 each contribute to the Mg(2+) site. His261, Arg358, and Ser385 together coordinate substrate. Position 261 (His261) interacts with thiamine diphosphate. Catalysis depends on Glu412, which acts as the Proton donor. Residue Phe438 participates in thiamine diphosphate binding. Residues His462, Asp470, and Arg521 each coordinate substrate.

Belongs to the transketolase family. In terms of assembly, homodimer. Requires Mg(2+) as cofactor. It depends on Ca(2+) as a cofactor. Mn(2+) is required as a cofactor. The cofactor is Co(2+). Thiamine diphosphate serves as cofactor.

It catalyses the reaction D-sedoheptulose 7-phosphate + D-glyceraldehyde 3-phosphate = aldehydo-D-ribose 5-phosphate + D-xylulose 5-phosphate. Its function is as follows. Catalyzes the transfer of a two-carbon ketol group from a ketose donor to an aldose acceptor, via a covalent intermediate with the cofactor thiamine pyrophosphate. The protein is Transketolase 1 (tkt1) of Vibrio cholerae serotype O1 (strain ATCC 39315 / El Tor Inaba N16961).